We begin with the raw amino-acid sequence, 150 residues long: L-alanine exporter AlaE (150 aa).

The next 4 helical transmembrane spans lie at 17 to 37 (FAMV…VSGM), 48 to 68 (LSIP…DYVL), 86 to 106 (LVAY…TVGA), and 111 to 131 (IITA…LYGY).

It belongs to the AlaE exporter family.

It localises to the cell inner membrane. Functionally, exports L-alanine. The polypeptide is L-alanine exporter AlaE (Vibrio cholerae serotype O1 (strain ATCC 39315 / El Tor Inaba N16961)).